Reading from the N-terminus, the 365-residue chain is Isopentenyl-diphosphate delta-isomerase (365 aa).

4 to 5 (RK) contributes to the substrate binding site. Residues 62–64 (GMT), Ser92, and Asn121 contribute to the FMN site. 92-94 (SQR) is a binding site for substrate. A substrate-binding site is contributed by Gln155. Residue Glu156 coordinates Mg(2+). FMN-binding positions include Lys187, Thr216, 267–269 (GVR), and 288–289 (AL).

The protein belongs to the IPP isomerase type 2 family. As to quaternary structure, homooctamer. Dimer of tetramers. FMN serves as cofactor. The cofactor is NADPH. It depends on Mg(2+) as a cofactor.

It localises to the cytoplasm. The catalysed reaction is isopentenyl diphosphate = dimethylallyl diphosphate. Involved in the biosynthesis of isoprenoids. Catalyzes the 1,3-allylic rearrangement of the homoallylic substrate isopentenyl (IPP) to its allylic isomer, dimethylallyl diphosphate (DMAPP). This chain is Isopentenyl-diphosphate delta-isomerase, found in Methanopyrus kandleri (strain AV19 / DSM 6324 / JCM 9639 / NBRC 100938).